The sequence spans 330 residues: Delta-aminolevulinic acid dehydratase (330 aa).

Zn(2+) contacts are provided by Cys-122, Cys-124, His-131, and Cys-132. Lys-199 acts as the Schiff-base intermediate with substrate in catalysis. The residue at position 199 (Lys-199) is an N6-succinyllysine. Position 209 (Arg-209) interacts with 5-aminolevulinate. A Phosphoserine modification is found at Ser-215. Arg-221 contributes to the 5-aminolevulinate binding site. Residue Cys-223 coordinates Zn(2+). Lys-252 serves as the catalytic Schiff-base intermediate with substrate. Lys-252 is subject to N6-succinyllysine. 5-aminolevulinate-binding residues include Ser-279 and Tyr-318.

Belongs to the ALAD family. As to quaternary structure, homooctamer; active form. Homohexamer; low activity form. Zn(2+) serves as cofactor.

It is found in the cytoplasm. The protein localises to the cytosol. It carries out the reaction 2 5-aminolevulinate = porphobilinogen + 2 H2O + H(+). It participates in porphyrin-containing compound metabolism; protoporphyrin-IX biosynthesis; coproporphyrinogen-III from 5-aminolevulinate: step 1/4. Can alternate between a fully active homooctamer and a low-activity homohexamer. A bound magnesium ion may promote the assembly of the fully active homooctamer. The magnesium-binding site is absent in the low-activity homohexamer. Inhibited by compounds that favor the hexameric state. Inhibited by divalent lead ions. The lead ions partially displace the zinc cofactor. Its function is as follows. Catalyzes an early step in the biosynthesis of tetrapyrroles. Binds two molecules of 5-aminolevulinate per subunit, each at a distinct site, and catalyzes their condensation to form porphobilinogen. The polypeptide is Delta-aminolevulinic acid dehydratase (ALAD) (Macaca fascicularis (Crab-eating macaque)).